A 113-amino-acid polypeptide reads, in one-letter code: Putative insulin-like growth factor 2-associated protein (113 aa).

Expressed in fetal and adult liver.

The polypeptide is Putative insulin-like growth factor 2-associated protein (Homo sapiens (Human)).